Reading from the N-terminus, the 609-residue chain is Chaperone protein DnaK (609 aa).

At threonine 172 the chain carries Phosphothreonine; by autocatalysis. The tract at residues 578 to 609 (QAQAQQQAGAGGAAKKDENVVDAEFEEVKDDK) is disordered. The span at 597-609 (VVDAEFEEVKDDK) shows a compositional bias: acidic residues.

The protein belongs to the heat shock protein 70 family.

Acts as a chaperone. The sequence is that of Chaperone protein DnaK from Geobacillus sp. (strain WCH70).